The sequence spans 270 residues: Tryptophan 2,3-dioxygenase-like protein (270 aa).

The protein belongs to the tryptophan 2,3-dioxygenase family.

This is Tryptophan 2,3-dioxygenase-like protein from Xanthomonas campestris pv. campestris (strain 8004).